The following is a 308-amino-acid chain: Ribonuclease Z (308 aa).

Residues His-61, His-63, Asp-65, His-66, His-139, Asp-210, and His-268 each contribute to the Zn(2+) site. Catalysis depends on Asp-65, which acts as the Proton acceptor.

This sequence belongs to the RNase Z family. As to quaternary structure, homodimer. Zn(2+) is required as a cofactor.

The enzyme catalyses Endonucleolytic cleavage of RNA, removing extra 3' nucleotides from tRNA precursor, generating 3' termini of tRNAs. A 3'-hydroxy group is left at the tRNA terminus and a 5'-phosphoryl group is left at the trailer molecule.. In terms of biological role, zinc phosphodiesterase, which displays some tRNA 3'-processing endonuclease activity. Probably involved in tRNA maturation, by removing a 3'-trailer from precursor tRNA. The chain is Ribonuclease Z from Natronomonas pharaonis (strain ATCC 35678 / DSM 2160 / CIP 103997 / JCM 8858 / NBRC 14720 / NCIMB 2260 / Gabara) (Halobacterium pharaonis).